Consider the following 247-residue polypeptide: Ubiquinone biosynthesis O-methyltransferase (247 aa).

S-adenosyl-L-methionine is bound by residues arginine 39, glycine 70, aspartate 91, and methionine 134.

Belongs to the methyltransferase superfamily. UbiG/COQ3 family.

It carries out the reaction a 3-demethylubiquinol + S-adenosyl-L-methionine = a ubiquinol + S-adenosyl-L-homocysteine + H(+). The catalysed reaction is a 3-(all-trans-polyprenyl)benzene-1,2-diol + S-adenosyl-L-methionine = a 2-methoxy-6-(all-trans-polyprenyl)phenol + S-adenosyl-L-homocysteine + H(+). It functions in the pathway cofactor biosynthesis; ubiquinone biosynthesis. Functionally, O-methyltransferase that catalyzes the 2 O-methylation steps in the ubiquinone biosynthetic pathway. The polypeptide is Ubiquinone biosynthesis O-methyltransferase (Cereibacter sphaeroides (strain ATCC 17023 / DSM 158 / JCM 6121 / CCUG 31486 / LMG 2827 / NBRC 12203 / NCIMB 8253 / ATH 2.4.1.) (Rhodobacter sphaeroides)).